Here is a 142-residue protein sequence, read N- to C-terminus: Transcriptional regulator MraZ (142 aa).

2 SpoVT-AbrB domains span residues 5 to 47 and 76 to 119; these read THTP…PTPE and AHDE…DRVA.

The protein belongs to the MraZ family. In terms of assembly, forms oligomers.

The protein resides in the cytoplasm. The protein localises to the nucleoid. The sequence is that of Transcriptional regulator MraZ from Salinispora tropica (strain ATCC BAA-916 / DSM 44818 / JCM 13857 / NBRC 105044 / CNB-440).